A 351-amino-acid chain; its full sequence is Histidinol-phosphate aminotransferase (351 aa).

An N6-(pyridoxal phosphate)lysine modification is found at Lys-221.

This sequence belongs to the class-II pyridoxal-phosphate-dependent aminotransferase family. Histidinol-phosphate aminotransferase subfamily. In terms of assembly, homodimer. The cofactor is pyridoxal 5'-phosphate.

It carries out the reaction L-histidinol phosphate + 2-oxoglutarate = 3-(imidazol-4-yl)-2-oxopropyl phosphate + L-glutamate. It participates in amino-acid biosynthesis; L-histidine biosynthesis; L-histidine from 5-phospho-alpha-D-ribose 1-diphosphate: step 7/9. In Staphylococcus epidermidis (strain ATCC 35984 / DSM 28319 / BCRC 17069 / CCUG 31568 / BM 3577 / RP62A), this protein is Histidinol-phosphate aminotransferase.